Here is a 784-residue protein sequence, read N- to C-terminus: ATP-dependent 6-phosphofructokinase, platelet type (784 aa).

Residue Met1 is modified to N-acetylmethionine. An N-terminal catalytic PFK domain 1 region spans residues 1–399; it reads MDADDSRAPK…NLNTYKRLAI (399 aa). Residues Ser6, Ser12, and Ser21 each carry the phosphoserine modification. ATP-binding positions include Gly34, 97 to 98, and 127 to 130; these read RC and GDGS. A Mg(2+)-binding site is contributed by Asp128. Ser142 is subject to Phosphoserine. Substrate is bound by residues 173-175, Arg210, 217-219, Glu273, Arg301, and 307-310; these read SID, MGR, and HVQR. Asp175 (proton acceptor) is an active-site residue. The residue at position 386 (Ser386) is a Phosphoserine. An N6-acetyllysine modification is found at Lys395. The interval 400–411 is interdomain linker; that stretch reads KLPDDQIPKTNC. Residues 412 to 784 are C-terminal regulatory PFK domain 2; it reads NVAVINVGAP…QLEHVQPWSV (373 aa). Arg481 is a binding site for beta-D-fructose 2,6-bisphosphate. The residue at position 486 (Lys486) is an N6-acetyllysine. Residues 538 to 542, Arg576, 583 to 585, and Glu639 each bind beta-D-fructose 2,6-bisphosphate; these read TVSNN and MGG. Ser540 carries O-linked (GlcNAc) serine glycosylation. Tyr651 is modified (phosphotyrosine). Residues Arg665 and 671–674 each bind beta-D-fructose 2,6-bisphosphate; that span reads HMQQ. Lys688 is subject to N6-acetyllysine. Beta-D-fructose 2,6-bisphosphate is bound at residue Arg744. Position 783 is a phosphoserine (Ser783).

It belongs to the phosphofructokinase type A (PFKA) family. ATP-dependent PFK group I subfamily. Eukaryotic two domain clade 'E' sub-subfamily. As to quaternary structure, homo- and heterotetramers. Phosphofructokinase (PFK) enzyme functions as a tetramer composed of different combinations of 3 types of subunits, called PFKM (where M stands for Muscle), PFKL (Liver) and PFKP (Platelet). The composition of the PFK tetramer differs according to the tissue type it is present in. In muscles, it is composed of 4 PFKM subunits (also called M4). In the liver, the predominant form is a tetramer of PFKL subunits (L4). In erythrocytes, both PFKM and PFKL subunits randomly tetramerize to form M4, L4 and other combinations (ML3, M2L2, M3L). In platelets, brain and fibroblasts, PFK contains a higher proportion of PFKP subunits. The kinetic and regulatory properties of the tetrameric enzyme are dependent on the subunit composition, hence can vary across tissues. Interacts with ATG4B; promoting phosphorylation of ATG4B. Mg(2+) serves as cofactor. In terms of processing, phosphorylation at Ser-386 promotes interaction with ATG4B. GlcNAcylation decreases enzyme activity.

It is found in the cytoplasm. The catalysed reaction is beta-D-fructose 6-phosphate + ATP = beta-D-fructose 1,6-bisphosphate + ADP + H(+). Its pathway is carbohydrate degradation; glycolysis; D-glyceraldehyde 3-phosphate and glycerone phosphate from D-glucose: step 3/4. Its activity is regulated as follows. Allosterically activated by ADP, AMP, or fructose 2,6-bisphosphate, and allosterically inhibited by ATP or citrate. Catalyzes the phosphorylation of D-fructose 6-phosphate to fructose 1,6-bisphosphate by ATP, the first committing step of glycolysis. The chain is ATP-dependent 6-phosphofructokinase, platelet type (PFKP) from Homo sapiens (Human).